The chain runs to 731 residues: DNA ligase (731 aa).

NAD(+) is bound by residues 47–51 (DAEYD), 96–97 (SI), and Glu-133. Lys-135 serves as the catalytic N6-AMP-lysine intermediate. NAD(+) contacts are provided by Arg-156, Glu-192, Lys-313, and Lys-337. Zn(2+) is bound by residues Cys-462, Cys-465, Cys-480, and Cys-486. The BRCT domain maps to 645-731 (AATLPLAGMT…RGTPPNAGGA (87 aa)).

This sequence belongs to the NAD-dependent DNA ligase family. LigA subfamily. Mg(2+) is required as a cofactor. Mn(2+) serves as cofactor.

The catalysed reaction is NAD(+) + (deoxyribonucleotide)n-3'-hydroxyl + 5'-phospho-(deoxyribonucleotide)m = (deoxyribonucleotide)n+m + AMP + beta-nicotinamide D-nucleotide.. Functionally, DNA ligase that catalyzes the formation of phosphodiester linkages between 5'-phosphoryl and 3'-hydroxyl groups in double-stranded DNA using NAD as a coenzyme and as the energy source for the reaction. It is essential for DNA replication and repair of damaged DNA. In Acidovorax sp. (strain JS42), this protein is DNA ligase.